The following is a 178-amino-acid chain: Acireductone dioxygenase (178 aa).

Fe(2+)-binding residues include histidine 87, histidine 89, glutamate 93, and histidine 132. Ni(2+)-binding residues include histidine 87, histidine 89, glutamate 93, and histidine 132.

The protein belongs to the acireductone dioxygenase (ARD) family. Fe(2+) is required as a cofactor. Requires Ni(2+) as cofactor.

The protein localises to the cytoplasm. Its subcellular location is the nucleus. The enzyme catalyses 1,2-dihydroxy-5-(methylsulfanyl)pent-1-en-3-one + O2 = 4-methylsulfanyl-2-oxobutanoate + formate + 2 H(+). It carries out the reaction 1,2-dihydroxy-5-(methylsulfanyl)pent-1-en-3-one + O2 = 3-(methylsulfanyl)propanoate + CO + formate + 2 H(+). The protein operates within amino-acid biosynthesis; L-methionine biosynthesis via salvage pathway; L-methionine from S-methyl-5-thio-alpha-D-ribose 1-phosphate: step 5/6. Catalyzes 2 different reactions between oxygen and the acireductone 1,2-dihydroxy-3-keto-5-methylthiopentene (DHK-MTPene) depending upon the metal bound in the active site. Fe-containing acireductone dioxygenase (Fe-ARD) produces formate and 2-keto-4-methylthiobutyrate (KMTB), the alpha-ketoacid precursor of methionine in the methionine recycle pathway. Ni-containing acireductone dioxygenase (Ni-ARD) produces methylthiopropionate, carbon monoxide and formate, and does not lie on the methionine recycle pathway. This Candida albicans (strain SC5314 / ATCC MYA-2876) (Yeast) protein is Acireductone dioxygenase.